The following is a 162-amino-acid chain: UPF0102 protein Bpet0439 (162 aa).

The segment at Q15–A52 is disordered. The segment covering Q20–A32 has biased composition (basic residues). A compositionally biased stretch (low complexity) spans R33–R48.

Belongs to the UPF0102 family.

The chain is UPF0102 protein Bpet0439 from Bordetella petrii (strain ATCC BAA-461 / DSM 12804 / CCUG 43448).